A 62-amino-acid chain; its full sequence is Large ribosomal subunit protein bL28 (62 aa).

The protein belongs to the bacterial ribosomal protein bL28 family.

In Staphylococcus haemolyticus (strain JCSC1435), this protein is Large ribosomal subunit protein bL28.